A 312-amino-acid chain; its full sequence is Very-long-chain 3-oxoacyl-CoA reductase (312 aa).

The chain crosses the membrane as a helical span at residues 4–24 (ALPAAGFLYWVGASTIAYLTL). 50 to 79 (GEWAVVTGGTDGIGKSYAEELAKRGMKIVL) contacts NADP(+). 2 helical membrane passes run 182 to 202 (GVILNISSASGMLPVPLLTVY) and 271 to 291 (GYVIHAIMGSINSILPRWIYF). A substrate-binding site is contributed by Ser-189. Tyr-202 acts as the Proton acceptor in catalysis. Positions 308-312 (KTKKN) match the Di-lysine motif motif.

This sequence belongs to the short-chain dehydrogenases/reductases (SDR) family. 17-beta-HSD 3 subfamily.

It localises to the endoplasmic reticulum membrane. The catalysed reaction is a very-long-chain (3R)-3-hydroxyacyl-CoA + NADP(+) = a very-long-chain 3-oxoacyl-CoA + NADPH + H(+). It catalyses the reaction 17beta-estradiol + NAD(+) = estrone + NADH + H(+). The enzyme catalyses 17beta-estradiol + NADP(+) = estrone + NADPH + H(+). It carries out the reaction 3-oxooctadecanoyl-CoA + NADPH + H(+) = (3R)-hydroxyoctadecanoyl-CoA + NADP(+). The catalysed reaction is (7Z,10Z,13Z,16Z)-3-oxodocosatetraenoyl-CoA + NADPH + H(+) = (3R)-hydroxy-(7Z,10Z,13Z,16Z)-docosatetraenoyl-CoA + NADP(+). It catalyses the reaction 3-oxo-(7Z,10Z,13Z,16Z,19Z)-docosapentaenoyl-CoA + NADPH + H(+) = (3R)-hydroxy-(7Z,10Z,13Z,16Z,19Z)-docosapentaenoyl-CoA + NADP(+). The enzyme catalyses (8Z,11Z,14Z)-3-oxoeicosatrienoyl-CoA + NADPH + H(+) = (3R)-hydroxy-(8Z,11Z,14Z)-eicosatrienoyl-CoA + NADP(+). It functions in the pathway lipid metabolism; fatty acid biosynthesis. The protein operates within steroid biosynthesis; estrogen biosynthesis. Its function is as follows. Catalyzes the second of the four reactions of the long-chain fatty acids elongation cycle. This endoplasmic reticulum-bound enzymatic process, allows the addition of two carbons to the chain of long- and very long-chain fatty acids/VLCFAs per cycle. This enzyme has a 3-ketoacyl-CoA reductase activity, reducing 3-ketoacyl-CoA to 3-hydroxyacyl-CoA, within each cycle of fatty acid elongation. Thereby, it may participate in the production of VLCFAs of different chain lengths that are involved in multiple biological processes as precursors of membrane lipids and lipid mediators. May also catalyze the transformation of estrone (E1) into estradiol (E2) and play a role in estrogen formation. The protein is Very-long-chain 3-oxoacyl-CoA reductase of Rattus norvegicus (Rat).